The primary structure comprises 121 residues: Large ribosomal subunit protein bL19 (121 aa).

The protein belongs to the bacterial ribosomal protein bL19 family.

Functionally, this protein is located at the 30S-50S ribosomal subunit interface and may play a role in the structure and function of the aminoacyl-tRNA binding site. This Bifidobacterium adolescentis (strain ATCC 15703 / DSM 20083 / NCTC 11814 / E194a) protein is Large ribosomal subunit protein bL19.